The following is a 90-amino-acid chain: Sec-independent protein translocase protein TatA (90 aa).

A helical transmembrane segment spans residues 2-22 (GVGGISIWQLLIVLVIILLLF). 2 stretches are compositionally biased toward basic and acidic residues: residues 45 to 68 (LRDE…HKAE) and 76 to 90 (ADAD…DEHK). The interval 45–90 (LRDEERRDAEEAATIEHKQAHKAENPSQRQQADADFKIKSGNDEHK) is disordered.

Belongs to the TatA/E family. The Tat system comprises two distinct complexes: a TatABC complex, containing multiple copies of TatA, TatB and TatC subunits, and a separate TatA complex, containing only TatA subunits. Substrates initially bind to the TatABC complex, which probably triggers association of the separate TatA complex to form the active translocon.

It localises to the cell inner membrane. Functionally, part of the twin-arginine translocation (Tat) system that transports large folded proteins containing a characteristic twin-arginine motif in their signal peptide across membranes. TatA could form the protein-conducting channel of the Tat system. The chain is Sec-independent protein translocase protein TatA from Nitrosococcus oceani (strain ATCC 19707 / BCRC 17464 / JCM 30415 / NCIMB 11848 / C-107).